Consider the following 197-residue polypeptide: Beta-crystallin A2 (197 aa).

The tract at residues Met1–Pro11 is N-terminal arm. Beta/gamma crystallin 'Greek key' domains follow at residues Ala12 to Asn52 and Gly53 to Leu99. The tract at residues Cys100 to Asp105 is connecting peptide. Beta/gamma crystallin 'Greek key' domains follow at residues Ser106–Ser147 and Gly148–Gln196.

Belongs to the beta/gamma-crystallin family. As to quaternary structure, homo/heterodimer, or complexes of higher-order. The structure of beta-crystallin oligomers seems to be stabilized through interactions between the N-terminal arms.

In terms of biological role, crystallins are the dominant structural components of the vertebrate eye lens. The protein is Beta-crystallin A2 (CRYBA2) of Oryctolagus cuniculus (Rabbit).